We begin with the raw amino-acid sequence, 415 residues long: Zinc finger protein ZFMSA12A (415 aa).

Residues 1-36 (MGIQDARWPSEDEETHLLDSSSAEQTRGEKCSDSTP) form a disordered region. 12 consecutive C2H2-type zinc fingers follow at residues 78 to 100 (HKCTQCGKCFIYRYELLEHQRLH), 106 to 129 (YRCSQCGKAFRRTSDLSSHRRTQC), 134 to 156 (YICIKCGNSFQSIQEKFRHQCVH), 161 to 183 (FDCSQCGKSFKKMHLLGKHELTH), 189 to 211 (FTCRQCGKVYPGMSELRSHQKIH), 217 to 239 (NQCMQCGKFFSSSACLTAHEVRH), 245 to 267 (QICARCGKAFKNKHDLNLHMRSH), 273 to 295 (FQCTYCGKRFSVSGNLNIHVRTH), 301 to 323 (YLCSDCGKAFISAGELQIHRRTH), 329 to 351 (YKCSVCGRGFTMASKVTLHMRVH), 357 to 379 (YVCSECGKGFSRGSELKKHSMNH), and 385 to 407 (YACQLCAKTYTCLNHLKRHLKTH).

The protein resides in the nucleus. This chain is Zinc finger protein ZFMSA12A, found in Micropterus salmoides (Largemouth bass).